A 387-amino-acid polypeptide reads, in one-letter code: TPR repeat-containing protein SYNPCC7002_A0425 (387 aa).

9 TPR repeats span residues 63–96, 97–130, 132–164, 166–198, 200–232, 233–266, 267–300, 302–334, and 336–368; these read LNAL…EANN, ARIH…EDDN, EFFN…QPNN, AYSL…DSNN, MALQ…RPND, AELR…STRD, SAMQ…DPQS, EAFA…SPTD, and AAFY…YQQR.

This is TPR repeat-containing protein SYNPCC7002_A0425 from Picosynechococcus sp. (strain ATCC 27264 / PCC 7002 / PR-6) (Agmenellum quadruplicatum).